The following is a 77-amino-acid chain: Small ribosomal subunit protein bS18 (77 aa).

Belongs to the bacterial ribosomal protein bS18 family. As to quaternary structure, part of the 30S ribosomal subunit. Forms a tight heterodimer with protein bS6.

Its function is as follows. Binds as a heterodimer with protein bS6 to the central domain of the 16S rRNA, where it helps stabilize the platform of the 30S subunit. This Lactobacillus helveticus (strain DPC 4571) protein is Small ribosomal subunit protein bS18.